The chain runs to 293 residues: Acetylglutamate kinase (293 aa).

Substrate is bound by residues 67–68 (GG), R89, and N190.

Belongs to the acetylglutamate kinase family. ArgB subfamily.

The protein resides in the cytoplasm. It catalyses the reaction N-acetyl-L-glutamate + ATP = N-acetyl-L-glutamyl 5-phosphate + ADP. The protein operates within amino-acid biosynthesis; L-arginine biosynthesis; N(2)-acetyl-L-ornithine from L-glutamate: step 2/4. Its function is as follows. Catalyzes the ATP-dependent phosphorylation of N-acetyl-L-glutamate. The polypeptide is Acetylglutamate kinase (Nitrosospira multiformis (strain ATCC 25196 / NCIMB 11849 / C 71)).